We begin with the raw amino-acid sequence, 371 residues long: N-methyl-L-tryptophan oxidase (371 aa).

4-34 (DLIVIGSGSVGSAAGYYASQAGLNVLMIDSA) contacts FAD. S-8alpha-FAD cysteine is present on cysteine 307.

Belongs to the MSOX/MTOX family. MTOX subfamily. In terms of assembly, monomer. Requires FAD as cofactor.

The catalysed reaction is N(alpha)-methyl-L-tryptophan + O2 + H2O = L-tryptophan + formaldehyde + H2O2. In terms of biological role, catalyzes the oxidative demethylation of N-methyl-L-tryptophan. The chain is N-methyl-L-tryptophan oxidase from Yersinia pseudotuberculosis serotype O:1b (strain IP 31758).